A 209-amino-acid chain; its full sequence is Ribosomal RNA large subunit methyltransferase E (209 aa).

Positions 60, 62, 80, 96, and 121 each coordinate S-adenosyl-L-methionine. Residue lysine 161 is the Proton acceptor of the active site.

This sequence belongs to the class I-like SAM-binding methyltransferase superfamily. RNA methyltransferase RlmE family.

The protein resides in the cytoplasm. The enzyme catalyses uridine(2552) in 23S rRNA + S-adenosyl-L-methionine = 2'-O-methyluridine(2552) in 23S rRNA + S-adenosyl-L-homocysteine + H(+). In terms of biological role, specifically methylates the uridine in position 2552 of 23S rRNA at the 2'-O position of the ribose in the fully assembled 50S ribosomal subunit. The protein is Ribosomal RNA large subunit methyltransferase E of Pseudomonas fluorescens (strain Pf0-1).